Consider the following 100-residue polypeptide: Urease subunit gamma (100 aa).

It belongs to the urease gamma subunit family. Heterotrimer of UreA (gamma), UreB (beta) and UreC (alpha) subunits. Three heterotrimers associate to form the active enzyme.

It is found in the cytoplasm. The catalysed reaction is urea + 2 H2O + H(+) = hydrogencarbonate + 2 NH4(+). It participates in nitrogen metabolism; urea degradation; CO(2) and NH(3) from urea (urease route): step 1/1. This chain is Urease subunit gamma, found in Flavobacterium johnsoniae (strain ATCC 17061 / DSM 2064 / JCM 8514 / BCRC 14874 / CCUG 350202 / NBRC 14942 / NCIMB 11054 / UW101) (Cytophaga johnsonae).